The following is a 298-amino-acid chain: Lipoyl synthase 1 (298 aa).

[4Fe-4S] cluster-binding residues include Cys-34, Cys-39, Cys-45, Cys-60, Cys-64, Cys-67, and Ser-274. The region spanning Phe-46–Leu-263 is the Radical SAM core domain.

Belongs to the radical SAM superfamily. Lipoyl synthase family. [4Fe-4S] cluster serves as cofactor.

The protein resides in the cytoplasm. It carries out the reaction [[Fe-S] cluster scaffold protein carrying a second [4Fe-4S](2+) cluster] + N(6)-octanoyl-L-lysyl-[protein] + 2 oxidized [2Fe-2S]-[ferredoxin] + 2 S-adenosyl-L-methionine + 4 H(+) = [[Fe-S] cluster scaffold protein] + N(6)-[(R)-dihydrolipoyl]-L-lysyl-[protein] + 4 Fe(3+) + 2 hydrogen sulfide + 2 5'-deoxyadenosine + 2 L-methionine + 2 reduced [2Fe-2S]-[ferredoxin]. The protein operates within protein modification; protein lipoylation via endogenous pathway; protein N(6)-(lipoyl)lysine from octanoyl-[acyl-carrier-protein]: step 2/2. Catalyzes the radical-mediated insertion of two sulfur atoms into the C-6 and C-8 positions of the octanoyl moiety bound to the lipoyl domains of lipoate-dependent enzymes, thereby converting the octanoylated domains into lipoylated derivatives. The polypeptide is Lipoyl synthase 1 (Thermosynechococcus vestitus (strain NIES-2133 / IAM M-273 / BP-1)).